A 70-amino-acid chain; its full sequence is U2-agatoxin-Ao1r (70 aa).

Positions 1 to 20 are cleaved as a signal peptide; sequence MRSIISLILISAMVFSMIAP. A propeptide spanning residues 21 to 34 is cleaved from the precursor; sequence VPEEERLQLSEDER. Disulfide bonds link Cys37–Cys53, Cys44–Cys58, and Cys52–Cys68. Leucine amide is present on Leu69.

It belongs to the neurotoxin 01 (U2-agtx) family. As to expression, expressed by the venom gland.

It localises to the secreted. Functionally, insect active toxin causing rapid but reversible paralysis in crickets. No activity shown in mammals. Does not show effect on mammalian voltage-gated calcium channels. This is U2-agatoxin-Ao1r from Agelena orientalis (Funnel-web spider).